The chain runs to 548 residues: Fluconazole resistance protein 1 (548 aa).

The interval S30–P94 is disordered. Positions A31 to Y51 are enriched in basic and acidic residues. The span at S60 to S73 shows a compositional bias: low complexity. Helical transmembrane passes span L104 to T124, V139 to F159, F179 to V199, I203 to I223, L230 to G250, F261 to F281, I347 to G367, V376 to I396, F416 to W436, V440 to F460, A476 to F496, and V511 to I531.

This sequence belongs to the major facilitator superfamily.

It is found in the membrane. Functionally, probable efflux transporter. Confers resistance to the azole derivative fluconazole (FCZ). This is Fluconazole resistance protein 1 (FLR1) from Saccharomyces cerevisiae (strain ATCC 204508 / S288c) (Baker's yeast).